The chain runs to 3797 residues: A-kinase anchor protein 9 (3797 aa).

The disordered stretch occupies residues 1-140 (MEDEERQRKL…SSEQGAQSSQ (140 aa)). 2 stretches are compositionally biased toward polar residues: residues 50-65 (HTDQQSGELCSESSQR) and 92-108 (EISTTADECSSEINGCN). Over residues 115–124 (KPTDPLREEE) the composition is skewed to basic and acidic residues. S139 carries the phosphoserine modification. 2 coiled-coil regions span residues 140 to 607 (QTCL…LRTQ) and 640 to 976 (IHYK…LLAN). S1288 carries the phosphoserine modification. Disordered stretches follow at residues 1643 to 1668 (STQTQDGHDDQEVEEQTLKDKTLERS), 2323 to 2343 (VVSTEQQREGARTLPEDEESF), and 2419 to 2454 (SDNLQPEDAPAQDVTKPLEKQTSLTRLQESPEASRT). Basic and acidic residues-rich tracts occupy residues 1648–1668 (DGHDDQEVEEQTLKDKTLERS) and 2328–2343 (QQREGARTLPEDEESF). Residues 1808-2377 (SRLQAAVEKL…MTHMNNVLKE (570 aa)) are a coiled coil. Residues 2438-2454 (KQTSLTRLQESPEASRT) are compositionally biased toward polar residues. The segment at 2498–2510 (DLQRSLEKFAAAL) is PKA-RII subunit binding domain. Disordered regions lie at residues 2604 to 2695 (LEEA…SSSG) and 3271 to 3296 (MEKDRQVHQKTLQTEQEANTQGQKKM). Acidic residues predominate over residues 2606–2615 (EAEERPEEGG). A compositionally biased stretch (basic and acidic residues) spans 2642–2669 (PLTEAKEKLSYSLEKEKRTGEQESREAP). Residues 2975–3325 (LQKADRRSLL…QVYKLDLEGK (351 aa)) adopt a coiled-coil conformation. Positions 3279–3294 (QKTLQTEQEANTQGQK) are enriched in polar residues. A phosphoserine mark is found at S3732, S3755, and S3787.

As to quaternary structure, interacts with the regulatory region of protein kinase N (PKN), protein phosphatase 2A (PP2A), protein phosphatase 1 (PP1) and the immature non-phosphorylated form of PKC epsilon. Interacts with CIP4 and FNBP1. Interacts with chloride intracellular channel proteins CLIC1, CLIC4 and CLIC5. CSNK1D binding promotes its centrosomal subcellular location. Interacts with GM130/GOLGA2; leading to recruitment to the Golgi apparatus. Interacts with KCNQ1; targets protein kinase A (PKA) catalytic and regulatory subunits and protein phosphatase 1 (PP1), to the heterodimer KCNQ1-KCNE1. Interacts with PDE4DIP isoform 2; this interaction stabilizes both proteins. In complex with PDE4DIP isoform 2, recruits CAMSAP2 to the Golgi apparatus. Forms a pericentrosomal complex with CDK5RAP2, EB1/MAPRE1 and PDE4DIP isoform 2; within this complex, MAPRE1 binding to CDK5RAP2 may be mediated by PDE4DIP. Interacts with MAPRE1 and MAPRE3. Interacts (via C-terminus) with CAMSAP2; this interaction is much stronger in the presence of PDE4DIP isoform 2. Interacts with CAMSAP3. Interacts (via C-terminus) with the gamma-tubulin ring complex (gamma-TuRC), composed of gamma-tubulin, TUBGCP2, TUBGCP3, TUBGCP4, TUBGCP5 and TUBGCP6.

The protein localises to the golgi apparatus. Its subcellular location is the cytoplasm. It is found in the cytoskeleton. The protein resides in the microtubule organizing center. It localises to the centrosome. In terms of biological role, scaffolding protein that assembles several protein kinases and phosphatases on the centrosome and Golgi apparatus. Required to maintain the integrity of the Golgi apparatus. Required for microtubule nucleation at the cis-side of the Golgi apparatus. Required for association of the centrosomes with the poles of the bipolar mitotic spindle during metaphase. In complex with PDE4DIP isoform 2/MMG8/SMYLE, recruits CAMSAP2 to the Golgi apparatus and tethers non-centrosomal minus-end microtubules to the Golgi, an important step for polarized cell movement. In complex with PDE4DIP isoform 2, EB1/MAPRE1 and CDK5RAP2, contributes to microtubules nucleation and extension also from the centrosome to the cell periphery. This is A-kinase anchor protein 9 (Akap9) from Mus musculus (Mouse).